The chain runs to 356 residues: Outer membrane protein Omp38 (356 aa).

A signal peptide spans 1–19; it reads MKLSRIALATMLVAAPLAA. An OmpA-like domain is found at 221-339; sequence ELTEDLNMEL…RVFATITGSR (119 aa). Meso-2,6-diaminopimelate-binding residues include asparagine 237, aspartate 271, threonine 273, asparagine 279, and arginine 286.

This sequence belongs to the outer membrane OOP (TC 1.B.6) superfamily. As to quaternary structure, homotrimer. Forms a pore with a size of 1.3 nm.

It localises to the cell outer membrane. The protein resides in the host mitochondrion. Functions as a porin. Induces apoptosis in human cell lines through caspase-dependent and AIF-dependent pathways. Purified Omp38 enters host cell and localizes to the mitochondria, which presumably leads to a release of proapoptotic molecules such as cytochrome c and AIF (apoptosis-inducing factor). Binds peptidoglycan, contributes to cell wall maintenance. This Acinetobacter baumannii (strain ATCC 19606 / DSM 30007 / JCM 6841 / CCUG 19606 / CIP 70.34 / NBRC 109757 / NCIMB 12457 / NCTC 12156 / 81) protein is Outer membrane protein Omp38.